The chain runs to 50 residues: Small ribosomal subunit protein uS14 (50 aa).

Zn(2+) contacts are provided by Cys-15, Cys-18, Cys-33, and Cys-36.

The protein belongs to the universal ribosomal protein uS14 family. Zinc-binding uS14 subfamily. In terms of assembly, part of the 30S ribosomal subunit. Zn(2+) is required as a cofactor.

Binds 16S rRNA, required for the assembly of 30S particles. The polypeptide is Small ribosomal subunit protein uS14 (Methanosarcina mazei (strain ATCC BAA-159 / DSM 3647 / Goe1 / Go1 / JCM 11833 / OCM 88) (Methanosarcina frisia)).